Reading from the N-terminus, the 351-residue chain is Adenine deaminase (351 aa).

The Zn(2+) site is built by His20, His22, and His200. The active-site Proton donor is the Glu203. Asp281 is a Zn(2+) binding site. Asp282 is a substrate binding site.

It belongs to the metallo-dependent hydrolases superfamily. Adenosine and AMP deaminases family. Adenine deaminase type 2 subfamily. The cofactor is Zn(2+).

It catalyses the reaction adenine + H2O + H(+) = hypoxanthine + NH4(+). Catalyzes the hydrolytic deamination of adenine to hypoxanthine. Plays an important role in the purine salvage pathway and in nitrogen catabolism. This chain is Adenine deaminase, found in Cupriavidus necator (strain ATCC 17699 / DSM 428 / KCTC 22496 / NCIMB 10442 / H16 / Stanier 337) (Ralstonia eutropha).